A 392-amino-acid chain; its full sequence is Ribosomal RNA large subunit methyltransferase G (392 aa).

Belongs to the methyltransferase superfamily. RlmG family.

The protein resides in the cytoplasm. It carries out the reaction guanosine(1835) in 23S rRNA + S-adenosyl-L-methionine = N(2)-methylguanosine(1835) in 23S rRNA + S-adenosyl-L-homocysteine + H(+). Specifically methylates the guanine in position 1835 (m2G1835) of 23S rRNA. The sequence is that of Ribosomal RNA large subunit methyltransferase G from Shewanella frigidimarina (strain NCIMB 400).